The chain runs to 415 residues: S-inosyl-L-homocysteine hydrolase (415 aa).

Substrate is bound by residues aspartate 123 and glutamate 148. Residue 149-151 (TTT) coordinates NAD(+). Substrate-binding residues include lysine 178 and aspartate 182. Residues asparagine 183, 212 to 217 (GYGWCG), glutamate 235, 291 to 293 (AGH), and asparagine 337 each bind NAD(+).

It belongs to the adenosylhomocysteinase family. In terms of assembly, exists both as a homotetramer and a homodimer, in a 4:1 ratio. It depends on NAD(+) as a cofactor.

Its subcellular location is the cytoplasm. It catalyses the reaction S-inosyl-L-homocysteine + H2O = L-homocysteine + inosine. Its pathway is amino-acid biosynthesis; S-adenosyl-L-methionine biosynthesis. Catalyzes the hydrolysis of S-inosyl-L-homocysteine (SIH) to L-homocysteine (Hcy) and inosine. Likely functions in a S-adenosyl-L-methionine (SAM) recycling pathway from S-adenosyl-L-homocysteine (SAH) produced from SAM-dependent methylation reactions. Can also catalyze the reverse reaction in vitro, i.e. the synthesis of SIH from Hcy and inosine. Is specific for SIH and inosine as it is unable to either hydrolyze SAH or synthesize SAH from adenosine and Hcy. In Methanocaldococcus jannaschii (strain ATCC 43067 / DSM 2661 / JAL-1 / JCM 10045 / NBRC 100440) (Methanococcus jannaschii), this protein is S-inosyl-L-homocysteine hydrolase.